A 431-amino-acid chain; its full sequence is Na(+)-translocating NADH-quinone reductase subunit F (431 aa).

Residues 10–30 (IFVASAAFCSLGLILVAVILL) form a helical membrane-spanning segment. Positions 41–133 (CKLKINNDDS…DLCLEVEERY (93 aa)) constitute a 2Fe-2S ferredoxin-type domain. Residues Cys-76, Cys-82, Cys-85, and Cys-117 each coordinate [2Fe-2S] cluster. Residues 136–286 (ASSWEGTVVS…SGPYGESFMK (151 aa)) form the FAD-binding FR-type domain.

Belongs to the NqrF family. In terms of assembly, composed of six subunits; NqrA, NqrB, NqrC, NqrD, NqrE and NqrF. The cofactor is [2Fe-2S] cluster. FAD is required as a cofactor.

The protein localises to the cell inner membrane. The catalysed reaction is a ubiquinone + n Na(+)(in) + NADH + H(+) = a ubiquinol + n Na(+)(out) + NAD(+). In terms of biological role, NQR complex catalyzes the reduction of ubiquinone-1 to ubiquinol by two successive reactions, coupled with the transport of Na(+) ions from the cytoplasm to the periplasm. The first step is catalyzed by NqrF, which accepts electrons from NADH and reduces ubiquinone-1 to ubisemiquinone by a one-electron transfer pathway. The polypeptide is Na(+)-translocating NADH-quinone reductase subunit F (Chlamydia trachomatis serovar A (strain ATCC VR-571B / DSM 19440 / HAR-13)).